The chain runs to 208 residues: FAS-associated death domain protein (208 aa).

One can recognise a DED domain in the interval 3 to 81 (PFLVLLHSVS…RHDLLRRVDD (79 aa)). The 85-residue stretch at 97 to 181 (LCAAFNVICD…LVADLVQEVQ (85 aa)) folds into the Death domain. A (Microbial infection) N-beta-linked (GlcNAc) arginine glycan is attached at Arg-117. Residues 187-208 (QNRSGAMSPMSWNSDASTSEAS) are disordered. Ser-194 is subject to Phosphoserine.

As to quaternary structure, can self-associate. Component of the AIM2 PANoptosome complex, a multiprotein complex that drives inflammatory cell death (PANoptosis). Component of the death-induced signaling complex (DISC) composed of cell surface receptor FAS/CD95 or TNFRSF1A, adapter protein FADD and the CASP8 protease; recruitment of CASP8 to the complex is required for processing of CASP8 into the p18 and p10 subunits. Interacts (via death domain) with FAS (via death domain). Interacts directly (via DED domain) with NOL3 (via CARD domain); inhibits death-inducing signaling complex (DISC) assembly by inhibiting the increase in FAS-FADD binding induced by FAS activation. Interacts with CFLAR, PEA15 and MBD4. When phosphorylated, part of a complex containing HIPK3 and FAS. May interact with MAVS/IPS1. Interacts with MOCV v-CFLAR protein and PIDD1. Interacts with RIPK1 and TRADD. Interacts with stimulated TNFRSF10B. Interacts with DDX24. In terms of assembly, (Microbial infection) Interacts with human papillomavirus 16/HPV16 protein E6. (Microbial infection) Interacts with molluscum contagiosum virus proteins MC159L/v-CFLAR and MC160L. (Microbial infection) Glycosylated at Arg-117 by enteropathogenic E.coli protein NleB1, C.rodentium protein NleB and S.typhimurium protein Ssek1: arginine GlcNAcylation prevents recruitment of caspase-8 or caspase-10 to the activated Fas (CD95) or TNFR-1 receptors. As to expression, expressed in a wide variety of tissues, except for peripheral blood mononuclear leukocytes.

The protein localises to the cytoplasm. In terms of biological role, apoptotic adapter molecule that recruits caspases CASP8 or CASP10 to the activated FAS/CD95 or TNFRSF1A/TNFR-1 receptors. The resulting aggregate called the death-inducing signaling complex (DISC) performs CASP8 proteolytic activation. Active CASP8 initiates the subsequent cascade of caspases mediating apoptosis. Involved in interferon-mediated antiviral immune response, playing a role in the positive regulation of interferon signaling. The protein is FAS-associated death domain protein of Homo sapiens (Human).